A 132-amino-acid polypeptide reads, in one-letter code: Small ribosomal subunit protein uS8 (132 aa).

Belongs to the universal ribosomal protein uS8 family. As to quaternary structure, part of the 30S ribosomal subunit. Contacts proteins S5 and S12.

One of the primary rRNA binding proteins, it binds directly to 16S rRNA central domain where it helps coordinate assembly of the platform of the 30S subunit. In Halothermothrix orenii (strain H 168 / OCM 544 / DSM 9562), this protein is Small ribosomal subunit protein uS8.